The sequence spans 394 residues: Mitogen-activated protein kinase homolog D5 (394 aa).

A Protein kinase domain is found at 62–347 (RPPIMPIGKG…VENALAHPYL (286 aa)). ATP is bound by residues 68–76 (IGKGAYGIV) and lysine 91. Aspartate 188 acts as the Proton acceptor in catalysis. Threonine 220 carries the post-translational modification Phosphothreonine. Residues 220–222 (TEY) carry the TXY motif. Tyrosine 222 bears the Phosphotyrosine mark.

It belongs to the protein kinase superfamily. CMGC Ser/Thr protein kinase family. MAP kinase subfamily. Requires Mg(2+) as cofactor. Post-translationally, dually phosphorylated on Thr-220 and Tyr-222, which activates the enzyme. In terms of tissue distribution, leaves, roots, root apices, and dormant and growing axillary buds.

The catalysed reaction is L-seryl-[protein] + ATP = O-phospho-L-seryl-[protein] + ADP + H(+). The enzyme catalyses L-threonyl-[protein] + ATP = O-phospho-L-threonyl-[protein] + ADP + H(+). Its activity is regulated as follows. Activated by tyrosine and threonine phosphorylation. This Pisum sativum (Garden pea) protein is Mitogen-activated protein kinase homolog D5.